We begin with the raw amino-acid sequence, 570 residues long: Putative periplasmic trehalase (570 aa).

Residues 1–34 form the signal peptide; it reads MIPPEIRRSVLLQKAIKLALAGTLLTFASFSATA. Residues Arg-159, 166-167, Asn-203, 212-214, 284-286, and Gly-317 each bind substrate; these read WD, RSQ, and RPE. Catalysis depends on proton donor/acceptor residues Asp-319 and Glu-503. Glu-518 is a substrate binding site. The tract at residues 544-570 is disordered; that stretch reads KPCDSVPSTRPASLSATPTKTPSAATQ. A compositionally biased stretch (low complexity) spans 554-570; the sequence is PASLSATPTKTPSAATQ.

This sequence belongs to the glycosyl hydrolase 37 family. Monomer.

Its subcellular location is the periplasm. It carries out the reaction alpha,alpha-trehalose + H2O = alpha-D-glucose + beta-D-glucose. In terms of biological role, provides the cells with the ability to utilize trehalose at high osmolarity by splitting it into glucose molecules that can subsequently be taken up by the phosphotransferase-mediated uptake system. The protein is Putative periplasmic trehalase of Salmonella typhi.